We begin with the raw amino-acid sequence, 353 residues long: Photosystem II D2 protein (353 aa).

Thr-2 carries the N-acetylthreonine modification. Thr-2 is modified (phosphothreonine). The helical transmembrane segment at 41 to 61 (CAYFALGGWFTGTTFVTSWYT) threads the bilayer. Residue His-118 participates in chlorophyll a binding. Residues 125 to 141 (GFMLRQFELARSVQLRP) form a helical membrane-spanning segment. Pheophytin a contacts are provided by Gln-130 and Asn-143. The helical transmembrane segment at 153-166 (VFISVFFIYPLGQS) threads the bilayer. His-198 contributes to the chlorophyll a binding site. Residues 208-228 (AALLCAIHGATVENTLFEDGD) form a helical membrane-spanning segment. A plastoquinone is bound by residues His-215 and Phe-262. His-215 provides a ligand contact to Fe cation. His-269 contacts Fe cation. A helical membrane pass occupies residues 279–295 (GLWMSALGVVGLALNLR).

It belongs to the reaction center PufL/M/PsbA/D family. PSII is composed of 1 copy each of membrane proteins PsbA, PsbB, PsbC, PsbD, PsbE, PsbF, PsbH, PsbI, PsbJ, PsbK, PsbL, PsbM, PsbT, PsbX, PsbY, PsbZ, Psb30/Ycf12, at least 3 peripheral proteins of the oxygen-evolving complex and a large number of cofactors. It forms dimeric complexes. The cofactor is The D1/D2 heterodimer binds P680, chlorophylls that are the primary electron donor of PSII, and subsequent electron acceptors. It shares a non-heme iron and each subunit binds pheophytin, quinone, additional chlorophylls, carotenoids and lipids. There is also a Cl(-1) ion associated with D1 and D2, which is required for oxygen evolution. The PSII complex binds additional chlorophylls, carotenoids and specific lipids..

The protein localises to the plastid membrane. The catalysed reaction is 2 a plastoquinone + 4 hnu + 2 H2O = 2 a plastoquinol + O2. Its function is as follows. Photosystem II (PSII) is a light-driven water:plastoquinone oxidoreductase that uses light energy to abstract electrons from H(2)O, generating O(2) and a proton gradient subsequently used for ATP formation. It consists of a core antenna complex that captures photons, and an electron transfer chain that converts photonic excitation into a charge separation. The D1/D2 (PsbA/PsbD) reaction center heterodimer binds P680, the primary electron donor of PSII as well as several subsequent electron acceptors. D2 is needed for assembly of a stable PSII complex. The protein is Photosystem II D2 protein of Cuscuta reflexa (Southern Asian dodder).